We begin with the raw amino-acid sequence, 439 residues long: 3-phosphoshikimate 1-carboxyvinyltransferase (439 aa).

Lys-29 and Arg-34 together coordinate 3-phosphoshikimate. Lys-29 serves as a coordination point for phosphoenolpyruvate. Phosphoenolpyruvate is bound by residues Gly-99 and Arg-128. Positions 171, 172, 173, 199, 316, and 343 each coordinate 3-phosphoshikimate. A phosphoenolpyruvate-binding site is contributed by Gln-173. The active-site Proton acceptor is the Asp-316. Arg-347, Arg-390, and Lys-416 together coordinate phosphoenolpyruvate.

This sequence belongs to the EPSP synthase family. As to quaternary structure, monomer.

It is found in the cytoplasm. It catalyses the reaction 3-phosphoshikimate + phosphoenolpyruvate = 5-O-(1-carboxyvinyl)-3-phosphoshikimate + phosphate. It participates in metabolic intermediate biosynthesis; chorismate biosynthesis; chorismate from D-erythrose 4-phosphate and phosphoenolpyruvate: step 6/7. Functionally, catalyzes the transfer of the enolpyruvyl moiety of phosphoenolpyruvate (PEP) to the 5-hydroxyl of shikimate-3-phosphate (S3P) to produce enolpyruvyl shikimate-3-phosphate and inorganic phosphate. The protein is 3-phosphoshikimate 1-carboxyvinyltransferase of Deinococcus radiodurans (strain ATCC 13939 / DSM 20539 / JCM 16871 / CCUG 27074 / LMG 4051 / NBRC 15346 / NCIMB 9279 / VKM B-1422 / R1).